Consider the following 88-residue polypeptide: Apolipoprotein C-I (88 aa).

The N-terminal stretch at M1–A26 is a signal peptide.

This sequence belongs to the apolipoprotein C1 family.

It is found in the secreted. Its function is as follows. Inhibitor of lipoprotein binding to the low density lipoprotein (LDL) receptor, LDL receptor-related protein, and very low density lipoprotein (VLDL) receptor. Associates with high density lipoproteins (HDL) and the triacylglycerol-rich lipoproteins in the plasma and makes up about 10% of the protein of the VLDL and 2% of that of HDL. Appears to interfere directly with fatty acid uptake and is also the major plasma inhibitor of cholesteryl ester transfer protein (CETP). Binds free fatty acids and reduces their intracellular esterification. Modulates the interaction of APOE with beta-migrating VLDL and inhibits binding of beta-VLDL to the LDL receptor-related protein. This Lycaon pictus (African wild dog) protein is Apolipoprotein C-I (APOC1).